We begin with the raw amino-acid sequence, 150 residues long: uncharacterized protein (150 aa).

Low complexity predominate over residues 1–19; it reads MNDDSSSSSSGDSSDGSSG. Disordered regions lie at residues 1 to 21 and 85 to 131; these read MNDD…SGTT and EPEA…AYPE. Residues 106 to 115 are compositionally biased toward pro residues; the sequence is RPPPTEPPTV.

This is an uncharacterized protein from Schizosaccharomyces pombe (strain 972 / ATCC 24843) (Fission yeast).